Consider the following 225-residue polypeptide: MMYHIPGVLSPQDVARFREQLEQAEWVDGRVTTGAQGAQVKNNQQVDTRSTLYAALQNEVLNAVNQHALFFAAALPRTLSTPLFNRYQNNETYGFHVDGAVRSHPQNGWMRTDLSATLFLSDPESYDGGELVVNDTFGQHRVKLPAGDLVLYPSSSLHCVTPVTRGVRVASFMWIQSMIRDDKKRAMLFELDNNIQSLKSHYGESEEILSLLNLYHNLLREWSEI.

One can recognise a Fe2OG dioxygenase domain in the interval threonine 78–serine 177. Residues histidine 96, aspartate 98, and histidine 158 each contribute to the Fe cation site. 2-oxoglutarate is bound at residue arginine 168.

Requires Fe(2+) as cofactor. The cofactor is L-ascorbate.

The sequence is that of PKHD-type hydroxylase YbiX from Escherichia coli (strain SMS-3-5 / SECEC).